The chain runs to 220 residues: Small ribosomal subunit protein uS3 (220 aa).

Residues 38-106 (IRNFINKKLQ…QVHINIVEIK (69 aa)) form the KH type-2 domain.

The protein belongs to the universal ribosomal protein uS3 family. In terms of assembly, part of the 30S ribosomal subunit. Forms a tight complex with proteins S10 and S14.

In terms of biological role, binds the lower part of the 30S subunit head. Binds mRNA in the 70S ribosome, positioning it for translation. This is Small ribosomal subunit protein uS3 from Lacticaseibacillus paracasei (strain ATCC 334 / BCRC 17002 / CCUG 31169 / CIP 107868 / KCTC 3260 / NRRL B-441) (Lactobacillus paracasei).